A 314-amino-acid polypeptide reads, in one-letter code: Acetaldehyde dehydrogenase 2 (314 aa).

15–18 (SGNI) contributes to the NAD(+) binding site. The active-site Acyl-thioester intermediate is the Cys133. NAD(+) is bound by residues 164 to 172 (SAGPGTRQN) and Asn289.

This sequence belongs to the acetaldehyde dehydrogenase family.

The enzyme catalyses acetaldehyde + NAD(+) + CoA = acetyl-CoA + NADH + H(+). This Nocardioides sp. (strain ATCC BAA-499 / JS614) protein is Acetaldehyde dehydrogenase 2.